Reading from the N-terminus, the 351-residue chain is Ferredoxin--NADP reductase (351 aa).

Residues Thr-14, Asp-33, Gln-41, Tyr-46, Ala-86, Phe-121, Asp-287, and Thr-328 each coordinate FAD.

It belongs to the ferredoxin--NADP reductase type 2 family. In terms of assembly, homodimer. Requires FAD as cofactor.

It catalyses the reaction 2 reduced [2Fe-2S]-[ferredoxin] + NADP(+) + H(+) = 2 oxidized [2Fe-2S]-[ferredoxin] + NADPH. The sequence is that of Ferredoxin--NADP reductase from Flavobacterium psychrophilum (strain ATCC 49511 / DSM 21280 / CIP 103535 / JIP02/86).